Reading from the N-terminus, the 33-residue chain is Photosystem II reaction center protein Psb30 (33 aa).

A helical transmembrane segment spans residues 5–25 (LIAQLTFLTSIIVSGPLVIAL).

It belongs to the Psb30/Ycf12 family. In terms of assembly, PSII is composed of 1 copy each of membrane proteins PsbA, PsbB, PsbC, PsbD, PsbE, PsbF, PsbH, PsbI, PsbJ, PsbK, PsbL, PsbM, PsbT, PsbX, PsbY, PsbZ, Psb30/Ycf12, peripheral proteins of the oxygen-evolving complex and a large number of cofactors. It forms dimeric complexes.

The protein localises to the plastid. It is found in the chloroplast thylakoid membrane. Functionally, a core subunit of photosystem II (PSII), probably helps stabilize the reaction center. In Psilotum nudum (Whisk fern), this protein is Photosystem II reaction center protein Psb30.